The chain runs to 381 residues: Neuropeptide Y receptor type 2 (381 aa).

The tract at residues 1–37 (MGPVGAEADENQTVEVKVEPYGPGHTTPRGELPPDPE) is disordered. At 1–51 (MGPVGAEADENQTVEVKVEPYGPGHTTPRGELPPDPEPELIDSTKLVEVQV) the chain is on the extracellular side. An N-linked (GlcNAc...) asparagine glycan is attached at Asn11. Residues 52–72 (ILILAYCSIILLGVVGNSLVI) form a helical membrane-spanning segment. Over 73-86 (HVVIKFKSMRTVTN) the chain is Cytoplasmic. A helical transmembrane segment spans residues 87–107 (FFIANLAVADLLVNTLCLPFT). Over 108 to 124 (LTYTLMGEWKMGPVLCH) the chain is Extracellular. Cys123 and Cys203 are disulfide-bonded. A helical transmembrane segment spans residues 125–145 (LVPYAQGLAVQVSTITLTVIA). Residues 146–165 (LDRHRCIVYHLESKISKRIS) are Cytoplasmic-facing. The helical transmembrane segment at 166-186 (FLIIGLAWGISALLASPLAIF) threads the bilayer. Residues 187 to 216 (REYSLIEIIPDFEIVACTEKWPGEEKSVYG) lie on the Extracellular side of the membrane. A helical transmembrane segment spans residues 217–237 (TVYSLSTLLILYVLPLGIISF). The Cytoplasmic segment spans residues 238 to 268 (SYTRIWSKLRNHVSPGAASDHYHQRRHKMTK). The helical transmembrane segment at 269 to 289 (MLVCVVVVFAVSWLPLHAFQL) threads the bilayer. The Extracellular portion of the chain corresponds to 290-304 (AVDIDSHVLDLKEYK). A helical transmembrane segment spans residues 305–325 (LIFTVFHIIAMCSTFANPLLY). Residues 326–381 (GWMNSNYRKAFLSAFRCEQRLDAIHSEVSMTFKAKKNLEVKKNNGPTDSFSEATNV) are Cytoplasmic-facing. Residue Cys342 is the site of S-palmitoyl cysteine attachment.

The protein belongs to the G-protein coupled receptor 1 family.

It localises to the cell membrane. Receptor for neuropeptide Y and peptide YY. The polypeptide is Neuropeptide Y receptor type 2 (Npy2r) (Mus musculus (Mouse)).